Consider the following 180-residue polypeptide: Flavodoxin B (180 aa).

The region spanning 4–173 (IGLFFGSNTG…RVAAWLAQIA (170 aa)) is the Flavodoxin-like domain.

This sequence belongs to the flavodoxin family. FMN is required as a cofactor.

Functionally, low-potential electron donor to a number of redox enzymes. NifF is the electron donor to nitrogenase. This chain is Flavodoxin B (nifF), found in Azotobacter chroococcum mcd 1.